A 298-amino-acid chain; its full sequence is ADP/ATP translocase 3 (298 aa).

N-acetylmethionine is present on Met-1. Residues Met-1–Ser-7 lie on the Mitochondrial intermembrane side of the membrane. Thr-2 carries the N-acetylthreonine; in ADP/ATP translocase 3, N-terminally processed modification. The Solcar 1 repeat unit spans residues Ile-6 to Ile-98. Residues Phe-8–Gln-37 traverse the membrane as a helical segment. Over Val-38–Asn-74 the chain is Mitochondrial matrix. At Lys-52 the chain carries N6,N6,N6-trimethyllysine. The chain crosses the membrane as a helical span at residues Leu-75–Phe-99. The ADP site is built by Arg-80 and Lys-92. Over Leu-100–Phe-109 the chain is Mitochondrial intermembrane. N6-acetyllysine is present on Lys-105. The helical transmembrane segment at Trp-110 to Phe-130 threads the bilayer. 2 Solcar repeats span residues Arg-111 to Met-201 and Val-212 to Val-297. The Mitochondrial matrix segment spans residues Val-131–Asn-178. Residues Val-179–Lys-199 form a helical membrane-spanning segment. Topologically, residues Gly-200 to Ile-210 are mitochondrial intermembrane. Residues Val-211 to Phe-231 traverse the membrane as a helical segment. The Mitochondrial matrix segment spans residues Asp-232–Gly-273. Residue Arg-235 participates in ADP binding. The tract at residues Arg-235 to Met-240 is important for transport activity. Positions Arg-235 to Met-240 match the Nucleotide carrier signature motif motif. Position 268 is an N6-acetyllysine (Lys-268). A helical transmembrane segment spans residues Ala-274 to Tyr-291. At Asp-292–Ile-298 the chain is on the mitochondrial intermembrane side.

Belongs to the mitochondrial carrier (TC 2.A.29) family. In terms of assembly, monomer. Found in a complex with ARL2, ARL2BP and SLC25A6/ANT3. Post-translationally, trimethylated by ANTKMT at Lys-52.

It is found in the mitochondrion inner membrane. Its subcellular location is the membrane. The catalysed reaction is ADP(in) + ATP(out) = ADP(out) + ATP(in). The enzyme catalyses H(+)(in) = H(+)(out). The matrix-open state (m-state) is inhibited by the membrane-permeable bongkrekic acid (BKA). The cytoplasmic-open state (c-state) is inhibited by the membrane-impermeable toxic inhibitor carboxyatractyloside (CATR). Proton transporter activity is inhibited by ADP:ATP antiporter activity. ADP:ATP antiporter that mediates import of ADP into the mitochondrial matrix for ATP synthesis, and export of ATP out to fuel the cell. Cycles between the cytoplasmic-open state (c-state) and the matrix-open state (m-state): operates by the alternating access mechanism with a single substrate-binding site intermittently exposed to either the cytosolic (c-state) or matrix (m-state) side of the inner mitochondrial membrane. In addition to its ADP:ATP antiporter activity, also involved in mitochondrial uncoupling and mitochondrial permeability transition pore (mPTP) activity. Plays a role in mitochondrial uncoupling by acting as a proton transporter: proton transport uncouples the proton flows via the electron transport chain and ATP synthase to reduce the efficiency of ATP production and cause mitochondrial thermogenesis. Proton transporter activity is inhibited by ADP:ATP antiporter activity, suggesting that SLC25A6/ANT3 acts as a master regulator of mitochondrial energy output by maintaining a delicate balance between ATP production (ADP:ATP antiporter activity) and thermogenesis (proton transporter activity). Proton transporter activity requires free fatty acids as cofactor, but does not transport it. Also plays a key role in mPTP opening, a non-specific pore that enables free passage of the mitochondrial membranes to solutes of up to 1.5 kDa, and which contributes to cell death. It is however unclear if SLC25A6/ANT3 constitutes a pore-forming component of mPTP or regulates it. The protein is ADP/ATP translocase 3 of Bos taurus (Bovine).